The sequence spans 165 residues: Putative 4-hydroxy-4-methyl-2-oxoglutarate aldolase (165 aa).

Substrate contacts are provided by residues 80–83 (GGNL) and arginine 102. Aspartate 103 is an a divalent metal cation binding site.

It belongs to the class II aldolase/RraA-like family. In terms of assembly, homotrimer. A divalent metal cation serves as cofactor.

It carries out the reaction 4-hydroxy-4-methyl-2-oxoglutarate = 2 pyruvate. It catalyses the reaction oxaloacetate + H(+) = pyruvate + CO2. Functionally, catalyzes the aldol cleavage of 4-hydroxy-4-methyl-2-oxoglutarate (HMG) into 2 molecules of pyruvate. Also contains a secondary oxaloacetate (OAA) decarboxylase activity due to the common pyruvate enolate transition state formed following C-C bond cleavage in the retro-aldol and decarboxylation reactions. In Cupriavidus necator (strain ATCC 17699 / DSM 428 / KCTC 22496 / NCIMB 10442 / H16 / Stanier 337) (Ralstonia eutropha), this protein is Putative 4-hydroxy-4-methyl-2-oxoglutarate aldolase.